The primary structure comprises 351 residues: Nicotinate-nucleotide--dimethylbenzimidazole phosphoribosyltransferase (351 aa).

The active-site Proton acceptor is glutamate 317.

This sequence belongs to the CobT family.

It carries out the reaction 5,6-dimethylbenzimidazole + nicotinate beta-D-ribonucleotide = alpha-ribazole 5'-phosphate + nicotinate + H(+). Its pathway is nucleoside biosynthesis; alpha-ribazole biosynthesis; alpha-ribazole from 5,6-dimethylbenzimidazole: step 1/2. In terms of biological role, catalyzes the synthesis of alpha-ribazole-5'-phosphate from nicotinate mononucleotide (NAMN) and 5,6-dimethylbenzimidazole (DMB). This chain is Nicotinate-nucleotide--dimethylbenzimidazole phosphoribosyltransferase, found in Pseudomonas aeruginosa (strain UCBPP-PA14).